We begin with the raw amino-acid sequence, 174 residues long: Ribulose bisphosphate carboxylase small subunit, chloroplastic (174 aa).

Residues 1–45 constitute a chloroplast transit peptide; the sequence is MAPTVMASSATSVAPFQGLKSTAGLPVSRRSNASSASVSNGGRIR.

It belongs to the RuBisCO small chain family. Heterohexadecamer of 8 large and 8 small subunits.

The protein localises to the plastid. It localises to the chloroplast. Functionally, ruBisCO catalyzes two reactions: the carboxylation of D-ribulose 1,5-bisphosphate, the primary event in carbon dioxide fixation, as well as the oxidative fragmentation of the pentose substrate. Both reactions occur simultaneously and in competition at the same active site. Although the small subunit is not catalytic it is essential for maximal activity. The polypeptide is Ribulose bisphosphate carboxylase small subunit, chloroplastic (Hordeum vulgare (Barley)).